A 639-amino-acid polypeptide reads, in one-letter code: uncharacterized protein (639 aa).

An N-terminal signal peptide occupies residues 1 to 16; the sequence is MLTLYLFTATCCFVCA. Disordered stretches follow at residues 80-128 and 432-488; these read RRRA…SDKL and QTAT…TSRT. Polar residues-rich tracts occupy residues 108–122 and 432–446; these read TYATTDPTNSPTASP and QTATASAKAHTQQQP. Residues 465–480 show a composition bias toward basic and acidic residues; it reads HGDEPHSDGELRRESH.

This is an uncharacterized protein from Human cytomegalovirus (strain Merlin) (HHV-5).